The sequence spans 576 residues: Putative SPbeta prophage-derived single-strand DNA-specific exonuclease YorK (576 aa).

Tyr473 carries the post-translational modification Phosphotyrosine.

The protein belongs to the RecJ family.

In terms of biological role, putative single-stranded-DNA-specific exonuclease. The sequence is that of Putative SPbeta prophage-derived single-strand DNA-specific exonuclease YorK (yorK) from Bacillus subtilis (strain 168).